A 163-amino-acid polypeptide reads, in one-letter code: Cytochrome b6-f complex subunit 4 (163 aa).

3 helical membrane-spanning segments follow: residues L36 to V56, L95 to E115, and T131 to I151.

The protein belongs to the cytochrome b family. PetD subfamily. In terms of assembly, the 4 large subunits of the cytochrome b6-f complex are cytochrome b6, subunit IV (17 kDa polypeptide, petD), cytochrome f and the Rieske protein, while the 4 small subunits are petG, petL, petM and petN. The complex functions as a dimer.

It localises to the plastid. The protein resides in the chloroplast thylakoid membrane. Its function is as follows. Component of the cytochrome b6-f complex, which mediates electron transfer between photosystem II (PSII) and photosystem I (PSI), cyclic electron flow around PSI, and state transitions. This Phalaenopsis aphrodite subsp. formosana (Moth orchid) protein is Cytochrome b6-f complex subunit 4.